Consider the following 913-residue polypeptide: Calcium-activated chloride channel regulator 1 (913 aa).

Residues 1-21 (MGPFKSSVFILILHLLEGALS) form the signal peptide. A metalloprotease domain region spans residues 46–199 (DETLIQQIKD…GITGKIEVNK (154 aa)). His-156 contacts Zn(2+). Glu-157 is a catalytic residue. Residues His-160 and Asp-167 each coordinate Zn(2+). Positions 306-475 (IVCLVLDKSG…NGLIDAFGAL (170 aa)) constitute a VWFA domain. N-linked (GlcNAc...) asparagine glycans are attached at residues Asn-503, Asn-769, Asn-803, Asn-809, Asn-830, Asn-835, Asn-885, and Asn-889. The tract at residues 866-885 (PPQTPPETPSPDETSAPCPN) is disordered.

Belongs to the CLCR family. In terms of processing, glycosylated. The translation product is autoproteolytically cleaved by the metalloprotease domain in the endoplasmic reticulum into a N-terminal and a C-terminal products that remain physically associated with each other. The cleavage is necessary for calcium-activated chloride channel (CaCC) activation activity.

Its subcellular location is the secreted. The protein resides in the extracellular space. Functionally, may be involved in mediating calcium-activated chloride conductance. May play critical roles in goblet cell metaplasia, mucus hypersecretion, cystic fibrosis and AHR. May be involved in the regulation of mucus production and/or secretion by goblet cells. Involved in the regulation of tissue inflammation in the innate immune response. May play a role as a tumor suppressor. Induces MUC5AC. The protein is Calcium-activated chloride channel regulator 1 (CLCA1) of Macaca mulatta (Rhesus macaque).